The primary structure comprises 2303 residues: Genome polyprotein (2303 aa).

A zinc finger lies at 3 to 14 (CKHGYPDVCPIC). The segment at 30 to 46 (DGEWFPTDLLCVDLDDD) is acidic. Residues 60–73 (MEWTDVPLVCDTVM) form a theilo region. The segment at 73–93 (MEPQGNASSSDKSNSQSSGNE) is disordered. The N-myristoyl glycine; by host moiety is linked to residue glycine 77. Residues 80-90 (SSSDKSNSQSS) show a composition bias toward low complexity. Cysteine 501 and cysteine 503 are joined by a disulfide. The interval 1041 to 1047 (YYKQRLI) is host EIF4E binding. An SF3 helicase domain is found at 1283–1448 (IPLASLCEKF…CKTPAGMLDI (166 aa)). 1312–1319 (GAAGQGKS) contributes to the ATP binding site. Tyrosine 1608 bears the O-(5'-phospho-RNA)-tyrosine mark. Residues 1636 to 1829 (NPVMDFELFC…AATIITRELI (194 aa)) form the Peptidase C3 domain. Active-site for protease 3C activity residues include histidine 1680, aspartate 1714, and cysteine 1793. Positions 2071–2189 (NYVYDVDYSN…GTNYQIDFNL (119 aa)) constitute a RdRp catalytic domain. Active-site for RdRp activity residues include aspartate 2077 and aspartate 2175.

Belongs to the picornaviruses polyprotein family. In terms of assembly, interacts with host EIF4E. Interacts with the leader protein. As to quaternary structure, interacts with host RAN; the complex L-RAN recruits cellular kinases responsible for the L-induced nucleocytoplasmic trafficking inhibition. The complex L-RAN can further bind to the host exportins XPO1/CRM1 and CSE1L/CAS. Interacts with the protein 2A. Interacts with host RNASEL; this interaction prevents RNASEL activation by its substrate 2'-5' oligoadenylates. Phosphorylated. Post-translationally, specific enzymatic cleavages by the viral protease in vivo yield a variety of precursors and mature proteins. The polyprotein seems to be cotranslationally cleaved at the 2A/2B junction by a ribosomal skip from one codon to the next without formation of a peptide bond. This process would release the P1-2A peptide from the translational complex. In terms of processing, during virion maturation, immature virions are rendered infectious following cleavage of VP0 into VP4 and VP2. This maturation seems to be an autocatalytic event triggered by the presence of RNA in the capsid and is followed by a conformational change of the particle. Uridylylated by the polymerase and is covalently linked to the 5'-end of genomic RNA. This uridylylated form acts as a nucleotide-peptide primer for the polymerase. Post-translationally, myristoylation is required during RNA encapsidation and formation of the mature virus particle.

The protein localises to the virion. It is found in the host cytoplasm. The protein resides in the host nucleus. It localises to the host nucleolus. Its subcellular location is the host cytoplasmic vesicle membrane. It catalyses the reaction RNA(n) + a ribonucleoside 5'-triphosphate = RNA(n+1) + diphosphate. The enzyme catalyses ATP + H2O = ADP + phosphate + H(+). It carries out the reaction Selective cleavage of Gln-|-Gly bond in the poliovirus polyprotein. In other picornavirus reactions Glu may be substituted for Gln, and Ser or Thr for Gly.. Forms a complex with host RAN and probably binds to exportins carrying activated MAPK in order to mediate the hyperphosphorylation of host Phe/Gly containing nuclear pore proteins (Nups) resulting in cessation of active nucleocytoplasmic transport. Proteins with NLS signals fail to import, cellular mRNAs fail to export, and some proteins small enough for diffusion are not retained anymore (efflux). The resulting inhibition of cellular protein synthesis serves to ensure maximal viral gene expression and to evade host immune response. The leader protein also inhibits host interferon regulatory factor 3 (IRF3) dimerization, thereby blocking the transcriptional activation of IFN genes. Binds to host RNase L thereby preventing its activation by 2'-5' oligoadenylates in order to counteract the antiviral interferon-inducible OAS/RNase L pathway. Inhibits the integrated stress response (ISR) in the infected cell. Inhibits the host EIF2AK2/PKR by rendering this kinase unable to detect double-stranded RNA. Also impairs host stress granule formation probably by acting on a step downstream of EIF2AK2/PKR activation. In terms of biological role, forms an icosahedral capsid of pseudo T=3 symmetry with capsid proteins VP2 and VP3. Together they form an icosahedral capsid composed of 60 copies of each VP1, VP2, and VP3, with a diameter of approximately 300 Angstroms. VP4 lies on the inner surface of the protein shell formed by VP1, VP2 and VP3. All the three latter proteins contain a beta-sheet structure called beta-barrel jelly roll. VP1 is situated at the 12 fivefold axes, whereas VP2 and VP3 are located at the quasi-sixfold axes. Its function is as follows. Lies on the inner surface of the capsid shell. After binding to the host receptor, the capsid undergoes conformational changes. Capsid protein VP4 is released, capsid protein VP1 N-terminus is externalized, and together, they shape a pore in the host membrane through which the viral genome is translocated into the host cell cytoplasm. After genome has been released, the channel shrinks. Functionally, VP0 precursor is a component of immature procapsids. Involved in host translation shutoff by inhibiting cap-dependent mRNA translation. Nuclear localization is required for this function. The resulting inhibition of cellular protein synthesis serves to ensure maximal viral gene expression and to evade host immune response. Inhibits the phosphorylation of the leader protein. Binds to the RNA stem-loop essential for the ribosomal frameshift event and trans-activates the production of protein 2B*. In terms of biological role, affects membrane integrity and causes an increase in membrane permeability. Its function is as follows. Associates with and induces structural rearrangements of intracellular membranes. It displays RNA-binding, nucleotide binding and NTPase activities. Functionally, serves as membrane anchor via its hydrophobic domain. Forms a primer, VPg-pU, which is utilized by the polymerase for the initiation of RNA chains. In terms of biological role, cysteine protease that generates mature viral proteins from the precursor polyprotein. In addition to its proteolytic activity, it binds to viral RNA, and thus influences viral genome replication. RNA and substrate cooperatively bind to the protease. Cleaves host PABP1, this cleavage is important for viral replication. Its function is as follows. Replicates the genomic and antigenomic RNAs by recognizing replications specific signals. Performs VPg uridylylation. This is Genome polyprotein from Mus musculus (Mouse).